Consider the following 159-residue polypeptide: ATP synthase subunit b 2 (159 aa).

The chain crosses the membrane as a helical span at residues 1 to 21 (MDATFWAFIALVIFVAIVVYM).

This sequence belongs to the ATPase B chain family. F-type ATPases have 2 components, F(1) - the catalytic core - and F(0) - the membrane proton channel. F(1) has five subunits: alpha(3), beta(3), gamma(1), delta(1), epsilon(1). F(0) has three main subunits: a(1), b(2) and c(10-14). The alpha and beta chains form an alternating ring which encloses part of the gamma chain. F(1) is attached to F(0) by a central stalk formed by the gamma and epsilon chains, while a peripheral stalk is formed by the delta and b chains.

The protein localises to the cell inner membrane. Its function is as follows. F(1)F(0) ATP synthase produces ATP from ADP in the presence of a proton or sodium gradient. F-type ATPases consist of two structural domains, F(1) containing the extramembraneous catalytic core and F(0) containing the membrane proton channel, linked together by a central stalk and a peripheral stalk. During catalysis, ATP synthesis in the catalytic domain of F(1) is coupled via a rotary mechanism of the central stalk subunits to proton translocation. Functionally, component of the F(0) channel, it forms part of the peripheral stalk, linking F(1) to F(0). This chain is ATP synthase subunit b 2, found in Brucella ovis (strain ATCC 25840 / 63/290 / NCTC 10512).